The sequence spans 104 residues: Large ribosomal subunit protein bL21 (104 aa).

This sequence belongs to the bacterial ribosomal protein bL21 family. As to quaternary structure, part of the 50S ribosomal subunit. Contacts protein L20.

Functionally, this protein binds to 23S rRNA in the presence of protein L20. The protein is Large ribosomal subunit protein bL21 of Streptococcus equi subsp. equi (strain 4047).